A 368-amino-acid chain; its full sequence is Homoserine O-acetyltransferase (368 aa).

The region spanning 41–352 (NVILITHALS…DYGHDSFLVE (312 aa)) is the AB hydrolase-1 domain. Residue Ser-147 is the Nucleophile of the active site. Arg-219 is a substrate binding site. Catalysis depends on residues Asp-313 and His-346. Asp-347 is a binding site for substrate.

The protein belongs to the AB hydrolase superfamily. MetX family. As to quaternary structure, homodimer.

It localises to the cytoplasm. It catalyses the reaction L-homoserine + acetyl-CoA = O-acetyl-L-homoserine + CoA. The protein operates within amino-acid biosynthesis; L-methionine biosynthesis via de novo pathway; O-acetyl-L-homoserine from L-homoserine: step 1/1. Transfers an acetyl group from acetyl-CoA to L-homoserine, forming acetyl-L-homoserine. This Nautilia profundicola (strain ATCC BAA-1463 / DSM 18972 / AmH) protein is Homoserine O-acetyltransferase.